Consider the following 93-residue polypeptide: Pyrimidine/purine nucleoside phosphorylase (93 aa).

Belongs to the nucleoside phosphorylase PpnP family.

The enzyme catalyses a purine D-ribonucleoside + phosphate = a purine nucleobase + alpha-D-ribose 1-phosphate. It carries out the reaction adenosine + phosphate = alpha-D-ribose 1-phosphate + adenine. It catalyses the reaction cytidine + phosphate = cytosine + alpha-D-ribose 1-phosphate. The catalysed reaction is guanosine + phosphate = alpha-D-ribose 1-phosphate + guanine. The enzyme catalyses inosine + phosphate = alpha-D-ribose 1-phosphate + hypoxanthine. It carries out the reaction thymidine + phosphate = 2-deoxy-alpha-D-ribose 1-phosphate + thymine. It catalyses the reaction uridine + phosphate = alpha-D-ribose 1-phosphate + uracil. The catalysed reaction is xanthosine + phosphate = alpha-D-ribose 1-phosphate + xanthine. Functionally, catalyzes the phosphorolysis of diverse nucleosides, yielding D-ribose 1-phosphate and the respective free bases. Can use uridine, adenosine, guanosine, cytidine, thymidine, inosine and xanthosine as substrates. Also catalyzes the reverse reactions. The protein is Pyrimidine/purine nucleoside phosphorylase of Pseudomonas syringae pv. syringae (strain B728a).